The sequence spans 1115 residues: DNA-directed RNA polymerase subunit beta (1115 aa).

Residues 1084 to 1115 are disordered; the sequence is HEAGEGEDDEYFEEDEEAVDDEPMTFDDDDME. Over residues 1088-1115 the composition is skewed to acidic residues; that stretch reads EGEDDEYFEEDEEAVDDEPMTFDDDDME.

It belongs to the RNA polymerase beta chain family. As to quaternary structure, the RNAP catalytic core consists of 2 alpha, 1 beta, 1 beta' and 1 omega subunit. When a sigma factor is associated with the core the holoenzyme is formed, which can initiate transcription.

The enzyme catalyses RNA(n) + a ribonucleoside 5'-triphosphate = RNA(n+1) + diphosphate. DNA-dependent RNA polymerase catalyzes the transcription of DNA into RNA using the four ribonucleoside triphosphates as substrates. The protein is DNA-directed RNA polymerase subunit beta of Desulfitobacterium hafniense (strain Y51).